Reading from the N-terminus, the 258-residue chain is Methylthioribulose-1-phosphate dehydratase (258 aa).

The segment at 1–21 is disordered; it reads MCSPTTENNNNNNDHLVQSSD. Cysteine 105 serves as a coordination point for substrate. Zn(2+) contacts are provided by histidine 123 and histidine 125. Glutamate 153 acts as the Proton donor/acceptor in catalysis. Histidine 210 is a binding site for Zn(2+).

The protein belongs to the aldolase class II family. MtnB subfamily. It depends on Zn(2+) as a cofactor.

The protein localises to the cytoplasm. The enzyme catalyses 5-(methylsulfanyl)-D-ribulose 1-phosphate = 5-methylsulfanyl-2,3-dioxopentyl phosphate + H2O. Its pathway is amino-acid biosynthesis; L-methionine biosynthesis via salvage pathway; L-methionine from S-methyl-5-thio-alpha-D-ribose 1-phosphate: step 2/6. Catalyzes the dehydration of methylthioribulose-1-phosphate (MTRu-1-P) into 2,3-diketo-5-methylthiopentyl-1-phosphate (DK-MTP-1-P). This chain is Methylthioribulose-1-phosphate dehydratase, found in Neurospora crassa (strain ATCC 24698 / 74-OR23-1A / CBS 708.71 / DSM 1257 / FGSC 987).